Reading from the N-terminus, the 436-residue chain is Xylose isomerase (436 aa).

Residues histidine 100 and aspartate 103 contribute to the active site. The Mg(2+) site is built by glutamate 231, glutamate 267, histidine 270, aspartate 295, aspartate 306, aspartate 308, and aspartate 338.

The protein belongs to the xylose isomerase family. As to quaternary structure, homotetramer. It depends on Mg(2+) as a cofactor.

It localises to the cytoplasm. The catalysed reaction is alpha-D-xylose = alpha-D-xylulofuranose. This chain is Xylose isomerase, found in Agrobacterium fabrum (strain C58 / ATCC 33970) (Agrobacterium tumefaciens (strain C58)).